Reading from the N-terminus, the 703-residue chain is Elongation factor G 1 (703 aa).

Residues 8–290 (ERYRNIGISA…AVIDFLPSPV (283 aa)) form the tr-type G domain. GTP-binding positions include 17 to 24 (AHIDAGKT), 88 to 92 (DTPGH), and 142 to 145 (NKMD).

The protein belongs to the TRAFAC class translation factor GTPase superfamily. Classic translation factor GTPase family. EF-G/EF-2 subfamily.

It localises to the cytoplasm. Its function is as follows. Catalyzes the GTP-dependent ribosomal translocation step during translation elongation. During this step, the ribosome changes from the pre-translocational (PRE) to the post-translocational (POST) state as the newly formed A-site-bound peptidyl-tRNA and P-site-bound deacylated tRNA move to the P and E sites, respectively. Catalyzes the coordinated movement of the two tRNA molecules, the mRNA and conformational changes in the ribosome. The chain is Elongation factor G 1 from Cupriavidus metallidurans (strain ATCC 43123 / DSM 2839 / NBRC 102507 / CH34) (Ralstonia metallidurans).